The following is a 3461-amino-acid chain: Reelin (3461 aa).

A signal peptide spans 1 to 26 (MERGCWAPRALVLAVLLLLATLRARA). Positions 27 to 191 (ATGYYPRFSP…GAPTEATAYS (165 aa)) constitute a Reelin domain. Cys-41 and Cys-127 form a disulfide bridge. N-linked (GlcNAc...) asparagine glycosylation is present at Asn-141. Cys-155 and Cys-179 are joined by a disulfide. Residues Asn-258, Asn-290, and Asn-306 are each glycosylated (N-linked (GlcNAc...) asparagine). Cys-540 and Cys-581 are joined by a disulfide. One copy of the BNR 1 repeat lies at 593-604 (EFSTNHGRSWSL). Cys-609 and Cys-614 form a disulfide bridge. Residue Asn-629 is glycosylated (N-linked (GlcNAc...) asparagine). In terms of domain architecture, EGF-like 1 spans 671-702 (IGPSCLKFCSGRGQCTRHGCKCDPGFSGPACE). Intrachain disulfides connect Cys-675-Cys-685 and Cys-692-Cys-701. The BNR 2 repeat unit spans residues 799-810 (HYSYDNGITWKL). Cysteines 895 and 937 form a disulfide. Residues 952–963 (EYSANHGLTWHL) form a BNR 3 repeat. Intrachain disulfides connect Cys-968-Cys-975, Cys-1034-Cys-1044, and Cys-1051-Cys-1060. Residues 1030 to 1061 (IGQQCPNMCSGHGSCDHGVCRCDQGYQGTECH) form the EGF-like 2 domain. A BNR 4 repeat occupies 1157–1168 (QYSNNGGIQWHL). Asn-1267 is a glycosylation site (N-linked (GlcNAc...) asparagine). One copy of the BNR 5 repeat lies at 1323–1334 (QYSHDAGMSWFL). 4 disulfides stabilise this stretch: Cys-1339–Cys-1348, Cys-1413–Cys-1423, Cys-1417–Cys-1428, and Cys-1430–Cys-1441. In terms of domain architecture, EGF-like 3 spans 1409-1442 (ISEPCPSYCSGHGDCISGVCFCDLGYTAAQGTCV). A glycan (N-linked (GlcNAc...) asparagine) is linked at Asn-1447. The cysteines at positions 1475 and 1522 are disulfide-linked. The stretch at 1535-1546 (QYSNDNGILWHL) is one BNR 6 repeat. Asn-1600 is a glycosylation site (N-linked (GlcNAc...) asparagine). Cys-1633 and Cys-1673 are oxidised to a cystine. The stretch at 1686-1697 (QYSLNNGKDWQL) is one BNR 7 repeat. Cysteines 1702 and 1709 form a disulfide. An N-linked (GlcNAc...) asparagine glycan is attached at Asn-1750. The 32-residue stretch at 1765 to 1796 (LASGCPWMCSGRGICDSGRCVCDRGFGGPFCV) folds into the EGF-like 4 domain. The BNR 8 repeat unit spans residues 1884 to 1895 (QFSVSGGVTWHL). Asn-1921 carries N-linked (GlcNAc...) asparagine glycosylation. Cys-1983 and Cys-2030 are joined by a disulfide. One copy of the BNR 9 repeat lies at 2043–2054 (EFSRDFGATWHL). Residues Cys-2059 and Cys-2070 are joined by a disulfide bond. Residues His-2061 and His-2074 each coordinate Zn(2+). In terms of domain architecture, EGF-like 5 spans 2129–2161 (IGPQCEEMCYGHGSCINGTKCICDPGYSGPTCK). Disulfide bonds link Cys-2133–Cys-2143, Cys-2137–Cys-2149, and Cys-2151–Cys-2160. N-linked (GlcNAc...) asparagine glycosylation is present at Asn-2145. Glu-2179 is a binding site for Zn(2+). Cys-2195 and Cys-2235 are joined by a disulfide. Residues 2250–2261 (QYSLNGGLSWSL) form a BNR 10 repeat. Zn(2+) is bound at residue Glu-2264. N-linked (GlcNAc...) asparagine glycosylation is found at Asn-2269 and Asn-2317. Cystine bridges form between Cys-2348-Cys-2387, Cys-2393-Cys-2559, Cys-2482-Cys-2492, Cys-2486-Cys-2497, Cys-2499-Cys-2508, and Cys-2544-Cys-2584. Zn(2+) contacts are provided by Glu-2397, Glu-2399, and His-2460. The BNR 11 repeat unit spans residues 2399-2410 (EYSVDLGLSWHP). In terms of domain architecture, EGF-like 6 spans 2478–2509 (IGDGCLDMCSGHGRCVQGSCVCDEQWGGLYCD). N-linked (GlcNAc...) asparagine glycosylation is present at Asn-2569. BNR repeat units follow at residues 2598 to 2609 (EYSVNGGITWNL) and 2778 to 2789 (QFSTDFGVSWSY). Cys-2794 and Cys-2801 are disulfide-bonded. The EGF-like 7 domain maps to 2853–2884 (LGPGCLDNCGGHGDCLKEQCICDPGYSGPNCY). An intrachain disulfide couples Cys-2919 to Cys-2966. A glycan (N-linked (GlcNAc...) asparagine) is linked at Asn-2962. A BNR 14 repeat occupies 2979–2990 (DFSTDGGITWTL). 2 N-linked (GlcNAc...) asparagine glycosylation sites follow: Asn-3016 and Asn-3073. The stretch at 3143 to 3155 (EYTKDARSDSWQL) is one BNR 15 repeat. Residues Cys-3160 and Cys-3170 are joined by a disulfide bond. Residue Asn-3185 is glycosylated (N-linked (GlcNAc...) asparagine). Positions 3228–3260 (IGEACPKLCSGHGYCTTGAVCICDESFQGDDCS) constitute an EGF-like 8 domain. 4 disulfide bridges follow: Cys-3232–Cys-3242, Cys-3236–Cys-3248, Cys-3250–Cys-3259, and Cys-3296–Cys-3346. A BNR 16 repeat occupies 3363 to 3374 (QYSVNNGITWHV). Residues Asn-3412 and Asn-3439 are each glycosylated (N-linked (GlcNAc...) asparagine).

The protein belongs to the reelin family. Oligomer of disulfide-linked homodimers. Post-translationally, N-glycosylated and to a lesser extent also O-glycosylated. The major isoform 1 is neuron-specific. It is abundantly produced during brain ontogenesis by the Cajal-Retzius cells and other pioneer neurons located in the telencephalic marginal zone and by granule cells of the external granular layer of the cerebellum. Expression is located in deeper layers in the developing hippocampus and olfactory bulb, low levels of expression are also detected in the immature striatum. At early developmental stages, expressed also in hypothalamic differentiation fields, tectum and spinal cord. A moderate to low level of expression occurs in the septal area, striatal fields, habenular nuclei, some thalamic nuclei, particularly the lateral geniculate, the retina and some nuclei of the reticular formation in the central field of the medulla. Very low levels found in liver and kidney. No expression in radial glial cells, cortical plate, Purkinje cells and inferior olivary neurons. The minor isoform 2 is only expressed in non neuronal cells. The minor isoform 3 is found in the same cells as isoform 1, but is almost undetectable in retina and brain stem.

The protein localises to the secreted. The protein resides in the extracellular space. It is found in the extracellular matrix. In terms of biological role, extracellular matrix serine protease secreted by pioneer neurons that plays a role in layering of neurons in the cerebral cortex and cerebellum by coordinating cell positioning during neurodevelopment. Regulates microtubule function in neurons and neuronal migration. Binding to the extracellular domains of lipoprotein receptors VLDLR and LRP8/APOER2 induces tyrosine phosphorylation of DAB1 and modulation of TAU phosphorylation. Affects migration of sympathetic preganglionic neurons in the spinal cord, where it seems to act as a barrier to neuronal migration. Enzymatic activity is important for the modulation of cell adhesion. In Mus musculus (Mouse), this protein is Reelin (Reln).